We begin with the raw amino-acid sequence, 176 residues long: uncharacterized protein (176 aa).

This is an uncharacterized protein from Bacillus anthracis.